A 283-amino-acid polypeptide reads, in one-letter code: ATP phosphoribosyltransferase (283 aa).

Belongs to the ATP phosphoribosyltransferase family. Long subfamily. It depends on Mg(2+) as a cofactor.

It is found in the cytoplasm. It carries out the reaction 1-(5-phospho-beta-D-ribosyl)-ATP + diphosphate = 5-phospho-alpha-D-ribose 1-diphosphate + ATP. Its pathway is amino-acid biosynthesis; L-histidine biosynthesis; L-histidine from 5-phospho-alpha-D-ribose 1-diphosphate: step 1/9. Feedback inhibited by histidine. In terms of biological role, catalyzes the condensation of ATP and 5-phosphoribose 1-diphosphate to form N'-(5'-phosphoribosyl)-ATP (PR-ATP). Has a crucial role in the pathway because the rate of histidine biosynthesis seems to be controlled primarily by regulation of HisG enzymatic activity. This is ATP phosphoribosyltransferase from Nocardia farcinica (strain IFM 10152).